The following is a 153-amino-acid chain: Putative nuclear shuttle protein (153 aa).

Belongs to the nanoviridae nuclear shuttle protein family.

The protein localises to the host nucleus. It is found in the host cytoplasm. Putative nuclear shuttle protein. The protein is Putative nuclear shuttle protein (DNA-N) of Trifolium subterraneum (Subterranean clover).